We begin with the raw amino-acid sequence, 304 residues long: Killer cell immunoglobulin-like receptor 2DS2 (304 aa).

Positions 1–21 (MSLMVVSMACVGFFLLQGAWP) are cleaved as a signal peptide. At 22–245 (HEGVHRKPSL…SKTGNPRHLH (224 aa)) the chain is on the extracellular side. 2 consecutive Ig-like C2-type domains span residues 42–107 (EETV…VTHS) and 142–205 (GESV…FRDS). 2 disulfide bridges follow: C49–C100 and C149–C198. N-linked (GlcNAc...) asparagine glycosylation is found at N84, N178, and N211. Positions 220–239 (VTGNPSNSWPSPTEPSSKTG) are disordered. Residues 246–265 (VLIGTSVVKIPFTILLFFLL) traverse the membrane as a helical segment. Residues 266–304 (HRWCSNKKNAAVMDQEPAGNRTVNSEDSDEQDHQEVSYA) are Cytoplasmic-facing. A disordered region spans residues 280–304 (QEPAGNRTVNSEDSDEQDHQEVSYA).

Belongs to the immunoglobulin superfamily.

It localises to the cell membrane. Receptor on natural killer (NK) cells for HLA-C alleles. Does not inhibit the activity of NK cells. The polypeptide is Killer cell immunoglobulin-like receptor 2DS2 (Homo sapiens (Human)).